Reading from the N-terminus, the 763-residue chain is Dual specificity tyrosine-phosphorylation-regulated kinase 1A (763 aa).

Serine 14 bears the Phosphoserine mark. A disordered region spans residues 33–56 (QMPHSHQYSDRRQPNISDQQVSAL). The segment covering 46–56 (PNISDQQVSAL) has biased composition (polar residues). Residue tyrosine 111 is modified to Phosphotyrosine; by autocatalysis. The segment at 115–136 (KKRRHQQGQGDDSSHKKERKVY) is disordered. The Bipartite nuclear localization signal motif lies at 117 to 134 (RRHQQGQGDDSSHKKERK). Tyrosine 140 carries the post-translational modification Phosphotyrosine; by autocatalysis. Tyrosine 145 carries the post-translational modification Phosphotyrosine. Tyrosine 159 is subject to Phosphotyrosine; by autocatalysis. The 321-residue stretch at 159-479 (YEIDSLIGKG…PYYALQHSFF (321 aa)) folds into the Protein kinase domain. Residue 165-173 (IGKGSFGQV) coordinates ATP. Phosphotyrosine; by autocatalysis is present on tyrosine 177. Lysine 188 contacts ATP. Tyrosine 219 is subject to Phosphotyrosine; by autocatalysis. 238-241 (FEML) serves as a coordination point for ATP. The active-site Proton acceptor is the aspartate 287. At serine 310 the chain carries Phosphoserine; by autocatalysis. Phosphotyrosine; by autocatalysis occurs at positions 319 and 321. Position 402 is a phosphothreonine; by autocatalysis (threonine 402). Residues 408-442 (TKDGKREYKPPGTRKLHNILGVETGGPGGRRAGES) form a disordered region. Position 449 is a phosphotyrosine; by autocatalysis (tyrosine 449). Positions 485–501 (EGTNTSNSVSTSPAMEQ) are enriched in polar residues. 3 disordered regions span residues 485 to 540 (EGTN…HSGG), 596 to 679 (NALH…GNQA), and 744 to 763 (DREE…VASS). Residues 502-525 (SQSSGTTSSTSSSSGGSSGTSNSG) are compositionally biased toward low complexity. Serine 529 and serine 538 each carry phosphoserine. The tract at residues 595 to 625 (QNALHHHHGNSSHHHHHHHHHHHHHGQQALG) is histidine-rich domain (HRD). Basic residues predominate over residues 598–620 (LHHHHGNSSHHHHHHHHHHHHHG). Positions 634–645 (NSPTNSSSTQDS) are enriched in polar residues. Positions 654-672 (SMTSLSSSTTSSSTSSSST) are enriched in low complexity. 2 positions are modified to phosphoserine: serine 748 and serine 758. A compositionally biased stretch (polar residues) spans 754–763 (CVQQSPVASS).

The protein belongs to the protein kinase superfamily. CMGC Ser/Thr protein kinase family. MNB/DYRK subfamily. As to quaternary structure, interacts with RAD54L2/ARIP4. Interacts with CRY2. Interacts with RANBP9. Interacts with WDR68. Interacts with SIRT1. Can also autophosphorylate on serine and threonine residues (in vitro). Autophosphorylated on numerous tyrosine residues. Detected in brain (at protein level). Ubiquitous.

The protein resides in the nucleus speckle. It catalyses the reaction L-seryl-[protein] + ATP = O-phospho-L-seryl-[protein] + ADP + H(+). The enzyme catalyses L-threonyl-[protein] + ATP = O-phospho-L-threonyl-[protein] + ADP + H(+). The catalysed reaction is L-tyrosyl-[protein] + ATP = O-phospho-L-tyrosyl-[protein] + ADP + H(+). It carries out the reaction [DNA-directed RNA polymerase] + ATP = phospho-[DNA-directed RNA polymerase] + ADP + H(+). Its activity is regulated as follows. Inhibited by RANBP9. Inhibited by harmine, leucettamine B and leucettine L41. Dual-specificity kinase which possesses both serine/threonine and tyrosine kinase activities. Exhibits a substrate preference for proline at position P+1 and arginine at position P-3. Plays an important role in double-strand breaks (DSBs) repair following DNA damage. Mechanistically, phosphorylates RNF169 and increases its ability to block accumulation of TP53BP1 at the DSB sites thereby promoting homologous recombination repair (HRR). Also acts as a positive regulator of transcription by acting as a CTD kinase that mediates phosphorylation of the CTD (C-terminal domain) of the large subunit of RNA polymerase II (RNAP II) POLR2A. May play a role in a signaling pathway regulating nuclear functions of cell proliferation. Modulates alternative splicing by phosphorylating the splice factor SRSF6. Has pro-survival function and negatively regulates the apoptotic process. Promotes cell survival upon genotoxic stress through phosphorylation of SIRT1. This in turn inhibits p53/TP53 activity and apoptosis. Phosphorylates SEPTIN4, SEPTIN5 and SF3B1 at 'Thr-434'. The chain is Dual specificity tyrosine-phosphorylation-regulated kinase 1A (Dyrk1a) from Rattus norvegicus (Rat).